The primary structure comprises 286 residues: UPF0725 protein At2g20620 (286 aa).

Positions 1–49 (MVLETPVCSPIDKESSSDDVQLNKPPKKKRKLDVVYPPRDNTSSSSDVK) are disordered.

It belongs to the UPF0725 (EMB2204) family.

The polypeptide is UPF0725 protein At2g20620 (Arabidopsis thaliana (Mouse-ear cress)).